The following is a 434-amino-acid chain: UPF0597 protein CLI_2075 (434 aa).

The protein belongs to the UPF0597 family.

The sequence is that of UPF0597 protein CLI_2075 from Clostridium botulinum (strain Langeland / NCTC 10281 / Type F).